Here is a 56-residue protein sequence, read N- to C-terminus: Large ribosomal subunit protein bL33 (56 aa).

It belongs to the bacterial ribosomal protein bL33 family.

This chain is Large ribosomal subunit protein bL33, found in Treponema denticola (strain ATCC 35405 / DSM 14222 / CIP 103919 / JCM 8153 / KCTC 15104).